The primary structure comprises 329 residues: 4-hydroxythreonine-4-phosphate dehydrogenase (329 aa).

Substrate contacts are provided by H136 and T137. Positions 166, 211, and 266 each coordinate a divalent metal cation. Residues K274, N283, and R292 each coordinate substrate.

It belongs to the PdxA family. In terms of assembly, homodimer. Requires Zn(2+) as cofactor. It depends on Mg(2+) as a cofactor. The cofactor is Co(2+).

It is found in the cytoplasm. It catalyses the reaction 4-(phosphooxy)-L-threonine + NAD(+) = 3-amino-2-oxopropyl phosphate + CO2 + NADH. The protein operates within cofactor biosynthesis; pyridoxine 5'-phosphate biosynthesis; pyridoxine 5'-phosphate from D-erythrose 4-phosphate: step 4/5. Catalyzes the NAD(P)-dependent oxidation of 4-(phosphooxy)-L-threonine (HTP) into 2-amino-3-oxo-4-(phosphooxy)butyric acid which spontaneously decarboxylates to form 3-amino-2-oxopropyl phosphate (AHAP). The polypeptide is 4-hydroxythreonine-4-phosphate dehydrogenase (Escherichia coli (strain K12 / MC4100 / BW2952)).